Here is a 511-residue protein sequence, read N- to C-terminus: MKKRALVSVSDKTGVVEFVKGLLEQGIEVISTGGTKKLLEENGLQVIGISEVTGFPEIMDGRVKTLHPNIHGGLLAVRDNETHVAQMNELGMEPIDFVVVNLYPFKETIAKPDVTFADAIENIDIGGPTMIRSAAKNHKFVSVIVDPVDYDVVLAELKENGEVAEETKRKLAAKVFRHTAAYDALISNYLTEQMGEESPETLTVTFEKKQDLRYGENPHQKATFYKAPFAATSSVAYAEQLHGKELSYNNINDADAALSIVKEFTEPAVVAVKHMNPCGVGVGTDIHEAYTRAYEADPVSIFGGIIAANREIDKATAEKLHEIFLEIIIAPSFSKEALEVLQSKKNLRLLTVNIEKATSASKKLTSVQGGLLVQEEDTLSLDESTISIPTKREPSEQEWKDLKLAWKVVKHVKSNAIVLAKDDMTIGVGAGQMNRVGSAKIAITQAGEKAQGSALASDAFFPMPDTVEEAAKAGITAIIQPGGSIRDEDSIKVADTYGIAMVFTGVRHFKH.

An MGS-like domain is found at 1-145 (MKKRALVSVS…KNHKFVSVIV (145 aa)).

The protein belongs to the PurH family.

The catalysed reaction is (6R)-10-formyltetrahydrofolate + 5-amino-1-(5-phospho-beta-D-ribosyl)imidazole-4-carboxamide = 5-formamido-1-(5-phospho-D-ribosyl)imidazole-4-carboxamide + (6S)-5,6,7,8-tetrahydrofolate. It carries out the reaction IMP + H2O = 5-formamido-1-(5-phospho-D-ribosyl)imidazole-4-carboxamide. Its pathway is purine metabolism; IMP biosynthesis via de novo pathway; 5-formamido-1-(5-phospho-D-ribosyl)imidazole-4-carboxamide from 5-amino-1-(5-phospho-D-ribosyl)imidazole-4-carboxamide (10-formyl THF route): step 1/1. It functions in the pathway purine metabolism; IMP biosynthesis via de novo pathway; IMP from 5-formamido-1-(5-phospho-D-ribosyl)imidazole-4-carboxamide: step 1/1. This is Bifunctional purine biosynthesis protein PurH from Bacillus anthracis (strain A0248).